The chain runs to 257 residues: 3-deoxy-manno-octulosonate cytidylyltransferase (257 aa).

This sequence belongs to the KdsB family.

The protein resides in the cytoplasm. It catalyses the reaction 3-deoxy-alpha-D-manno-oct-2-ulosonate + CTP = CMP-3-deoxy-beta-D-manno-octulosonate + diphosphate. Its pathway is nucleotide-sugar biosynthesis; CMP-3-deoxy-D-manno-octulosonate biosynthesis; CMP-3-deoxy-D-manno-octulosonate from 3-deoxy-D-manno-octulosonate and CTP: step 1/1. The protein operates within bacterial outer membrane biogenesis; lipopolysaccharide biosynthesis. Its function is as follows. Activates KDO (a required 8-carbon sugar) for incorporation into bacterial lipopolysaccharide in Gram-negative bacteria. The chain is 3-deoxy-manno-octulosonate cytidylyltransferase from Xylella fastidiosa (strain 9a5c).